The sequence spans 840 residues: Heat shock 70 kDa protein 4 (840 aa).

K53 is modified (N6-acetyllysine). The residue at position 76 (S76) is a Phosphoserine. Phosphotyrosine is present on residues Y89 and Y336. S393 and S415 each carry phosphoserine. K430 is subject to N6-acetyllysine. The interval 500–575 (VHKSEENEEP…QAKKAKVKTS (76 aa)) is disordered. Over residues 514–533 (QNAKEEEKMQVDQEEPHVEE) the composition is skewed to basic and acidic residues. Phosphothreonine is present on T538. A phosphoserine mark is found at S546 and S647. The residue at position 660 (Y660) is a Phosphotyrosine. At K679 the chain carries N6-acetyllysine. Phosphoserine is present on S756. K773 is subject to N6-methyllysine. The interval 779-840 (CSPIISKPKP…DKKLPEMDID (62 aa)) is disordered. Composition is skewed to basic and acidic residues over residues 788–799 (PKVEPPKEEQKN) and 829–840 (DSDKKLPEMDID).

Belongs to the heat shock protein 70 family. Interacts with TJP1/ZO-1.

Its subcellular location is the cytoplasm. The sequence is that of Heat shock 70 kDa protein 4 (HSPA4) from Homo sapiens (Human).